The chain runs to 272 residues: ATP synthase subunit a (272 aa).

A run of 5 helical transmembrane segments spans residues 41-61 (TLNI…LVLF), 101-121 (LIAP…LMDL), 147-167 (DVNI…FYSI), 212-232 (LFGN…LLPW), and 243-263 (AIFH…LTIV).

Belongs to the ATPase A chain family. In terms of assembly, F-type ATPases have 2 components, CF(1) - the catalytic core - and CF(0) - the membrane proton channel. CF(1) has five subunits: alpha(3), beta(3), gamma(1), delta(1), epsilon(1). CF(0) has three main subunits: a(1), b(2) and c(9-12). The alpha and beta chains form an alternating ring which encloses part of the gamma chain. CF(1) is attached to CF(0) by a central stalk formed by the gamma and epsilon chains, while a peripheral stalk is formed by the delta and b chains.

It is found in the cell inner membrane. Key component of the proton channel; it plays a direct role in the translocation of protons across the membrane. The chain is ATP synthase subunit a from Cronobacter sakazakii (strain ATCC BAA-894) (Enterobacter sakazakii).